A 382-amino-acid polypeptide reads, in one-letter code: Sphingoid long-chain base transporter RSB1 (382 aa).

The Extracellular portion of the chain corresponds to 1–34 (MSNATNNTLGSLLPQLEAAANSNSLYGGMVPNLR). N3 and N6 each carry an N-linked (GlcNAc...) asparagine glycan. Residues 35–55 (FNITMIVIWGILLTIHVVQLL) form a helical membrane-spanning segment. The Cytoplasmic segment spans residues 56 to 57 (MR). The chain crosses the membrane as a helical span at residues 58–78 (QYWFSIAFICTGILEVLGYIG). Topologically, residues 79–90 (RTWSHSNVADMD) are extracellular. The chain crosses the membrane as a helical span at residues 91 to 111 (AFLLNMICLTIAPVFTMGGIY). Residues 112–135 (YQLAKLIEVYGHRFSLLPSPMAYS) lie on the Cytoplasmic side of the membrane. The chain crosses the membrane as a helical span at residues 136 to 156 (FIFICSDIVSLVVQAVGGGLC). The Extracellular portion of the chain corresponds to 157-171 (GVAVTDGTSTTTGNH). The chain crosses the membrane as a helical span at residues 172–192 (VFIAGLAIQVASMAIFLMLWF). Residues 193–241 (HFLFRIYISVRWEHINSRPISLSLLKISQTEVDYLYREKFHFLRLEPKR) are Cytoplasmic-facing. Residues 242–262 (WVFHYFNLAMTVAVLTIFTRC) traverse the membrane as a helical segment. Topologically, residues 263-281 (CYRLAELVVGWDGYLITHE) are extracellular. Residues 282–302 (WYFIILDALMMAIATVTLTIF) form a helical membrane-spanning segment. Residues 303 to 382 (HPGFAFKGRS…LFSSKKKAKL (80 aa)) lie on the Cytoplasmic side of the membrane.

Belongs to the lipid-translocating exporter (LTE) (TC 9.A.26.1) family.

The protein localises to the cell membrane. Its function is as follows. Catalyzes the ATP-dependent translocation of sphingoid long-chain bases (LCBs) from the cytoplasmic site toward the extracytoplasmic side of the membrane (flip-flop). Involved in the establishment of the functional lipid asymmetry of the plasma membrane. Regulates intracellular levels of LCBs, sphingolipid precursors that are growth inhibitory at increased levels. This is Sphingoid long-chain base transporter RSB1 (RSB1) from Saccharomyces cerevisiae (strain Lalvin EC1118 / Prise de mousse) (Baker's yeast).